The following is a 154-amino-acid chain: Bacterial ferritin (154 aa).

Positions 1–145 (MQGHPEVIDY…QQLGLIARMG (145 aa)) constitute a Ferritin-like diiron domain. Fe(3+) is bound by residues Glu18, His46, Glu47, Glu50, Glu51, His54, Glu93, Asp129, and His130.

The protein belongs to the bacterioferritin family. As to quaternary structure, the bacterioferritin (BFR) complex is formed of 24 subunits (FtnA and BfrB) arranged as 12 homodimers. The holocomplex contains about 8.7% Fe and 8.0% phosphate. In vivo purifies with BfrB in varying ratios, depending on the O(2) content; as O(2) decreases FtnA content rises. Pure FtnA BFR complexes are not isolated in situ, although in a bfrB deletion some iron will accumulate in FtnA ferritin complexes. Upon crystallization forms homooligomers of 24 subunits, the BFR complex, arranged as 12 dimers, that are packed together to form an approximately spherical molecule with a central cavity, in which large amounts of iron can be deposited. The BFR shell has three- and four-fold pores; Fe(2+) may move in and out of the shell via the four-fold pores. Does not interact with Bfd.

It is found in the cytoplasm. It catalyses the reaction 4 Fe(2+) + O2 + 4 H(+) = 4 Fe(3+) + 2 H2O. The enzyme catalyses Fe(2+)(in) = Fe(2+)(out). Functionally, plays a role in catalase A (katA) expression; activity is required for optimal KatA activity and resistance to H(2)O(2). Iron-storage protein that is part of the heterooligomeric bacterioferritin (BFR) complex. The ferroxidase center binds Fe(2+), oxidizes it using dioxygen to Fe(3+), and participates in subsequent Fe(3+) oxide mineral core formation within the central cavity of the BFR protein shell. Can store up to 520 iron atoms per ferritin protein molecule. Iron release requires only the input of electrons from ferredoxin NADP reductase (FPR), does not require Bfd. Does not bind heme. The polypeptide is Bacterial ferritin (Pseudomonas aeruginosa (strain ATCC 15692 / DSM 22644 / CIP 104116 / JCM 14847 / LMG 12228 / 1C / PRS 101 / PAO1)).